The primary structure comprises 334 residues: Fructose-1,6-bisphosphatase class 1 (334 aa).

Residues E91, D113, L115, and D116 each contribute to the Mg(2+) site. Residues 116-119 (DGSS), N208, and K274 contribute to the substrate site. Residue E280 coordinates Mg(2+).

The protein belongs to the FBPase class 1 family. Homotetramer. It depends on Mg(2+) as a cofactor.

The protein localises to the cytoplasm. It carries out the reaction beta-D-fructose 1,6-bisphosphate + H2O = beta-D-fructose 6-phosphate + phosphate. Its pathway is carbohydrate biosynthesis; gluconeogenesis. The chain is Fructose-1,6-bisphosphatase class 1 from Herminiimonas arsenicoxydans.